The following is a 166-amino-acid chain: NAD(P)H-quinone oxidoreductase subunit I, chloroplastic (166 aa).

4Fe-4S ferredoxin-type domains lie at 55–84 and 95–124; these read GRIHFEFDKCIACEVCVRVCPIDLPVVDWK and LNYSIDFGICIFCGNCVEYCPTNCLSMTEE. Positions 64, 67, 70, 74, 104, 107, 110, and 114 each coordinate [4Fe-4S] cluster.

The protein belongs to the complex I 23 kDa subunit family. In terms of assembly, NDH is composed of at least 16 different subunits, 5 of which are encoded in the nucleus. Requires [4Fe-4S] cluster as cofactor.

It is found in the plastid. The protein resides in the chloroplast thylakoid membrane. It carries out the reaction a plastoquinone + NADH + (n+1) H(+)(in) = a plastoquinol + NAD(+) + n H(+)(out). The enzyme catalyses a plastoquinone + NADPH + (n+1) H(+)(in) = a plastoquinol + NADP(+) + n H(+)(out). Its function is as follows. NDH shuttles electrons from NAD(P)H:plastoquinone, via FMN and iron-sulfur (Fe-S) centers, to quinones in the photosynthetic chain and possibly in a chloroplast respiratory chain. The immediate electron acceptor for the enzyme in this species is believed to be plastoquinone. Couples the redox reaction to proton translocation, and thus conserves the redox energy in a proton gradient. This is NAD(P)H-quinone oxidoreductase subunit I, chloroplastic from Rensonia salvadorica.